The sequence spans 419 residues: S-adenosylmethionine synthase (419 aa).

Residue histidine 15 participates in ATP binding. Residue aspartate 17 participates in Mg(2+) binding. Residue glutamate 43 coordinates K(+). L-methionine is bound by residues glutamate 56 and glutamine 100. The flexible loop stretch occupies residues 100 to 110 (QSPDIAQGVDE). Residues 171–173 (DGK), 248–249 (KF), aspartate 257, 263–264 (RK), alanine 280, and lysine 284 contribute to the ATP site. Aspartate 257 is a binding site for L-methionine. Lysine 288 provides a ligand contact to L-methionine.

This sequence belongs to the AdoMet synthase family. Homotetramer; dimer of dimers. The cofactor is Mg(2+). K(+) is required as a cofactor.

The protein resides in the cytoplasm. The catalysed reaction is L-methionine + ATP + H2O = S-adenosyl-L-methionine + phosphate + diphosphate. The protein operates within amino-acid biosynthesis; S-adenosyl-L-methionine biosynthesis; S-adenosyl-L-methionine from L-methionine: step 1/1. Its function is as follows. Catalyzes the formation of S-adenosylmethionine (AdoMet) from methionine and ATP. The overall synthetic reaction is composed of two sequential steps, AdoMet formation and the subsequent tripolyphosphate hydrolysis which occurs prior to release of AdoMet from the enzyme. The polypeptide is S-adenosylmethionine synthase (Parasynechococcus marenigrum (strain WH8102)).